The chain runs to 270 residues: Hydroxyethylthiazole kinase (270 aa).

A substrate-binding site is contributed by M47. Residues R123 and T169 each contribute to the ATP site. G196 is a binding site for substrate.

Belongs to the Thz kinase family. Mg(2+) serves as cofactor.

It catalyses the reaction 5-(2-hydroxyethyl)-4-methylthiazole + ATP = 4-methyl-5-(2-phosphooxyethyl)-thiazole + ADP + H(+). Its pathway is cofactor biosynthesis; thiamine diphosphate biosynthesis; 4-methyl-5-(2-phosphoethyl)-thiazole from 5-(2-hydroxyethyl)-4-methylthiazole: step 1/1. Functionally, catalyzes the phosphorylation of the hydroxyl group of 4-methyl-5-beta-hydroxyethylthiazole (THZ). This chain is Hydroxyethylthiazole kinase, found in Roseiflexus sp. (strain RS-1).